The sequence spans 265 residues: Thiazole synthase (265 aa).

The active-site Schiff-base intermediate with DXP is the lysine 107. Residues glycine 168, 194 to 195 (AG), and 216 to 217 (NT) each bind 1-deoxy-D-xylulose 5-phosphate.

The protein belongs to the ThiG family. In terms of assembly, homotetramer. Forms heterodimers with either ThiH or ThiS.

It is found in the cytoplasm. It carries out the reaction [ThiS sulfur-carrier protein]-C-terminal-Gly-aminoethanethioate + 2-iminoacetate + 1-deoxy-D-xylulose 5-phosphate = [ThiS sulfur-carrier protein]-C-terminal Gly-Gly + 2-[(2R,5Z)-2-carboxy-4-methylthiazol-5(2H)-ylidene]ethyl phosphate + 2 H2O + H(+). The protein operates within cofactor biosynthesis; thiamine diphosphate biosynthesis. Functionally, catalyzes the rearrangement of 1-deoxy-D-xylulose 5-phosphate (DXP) to produce the thiazole phosphate moiety of thiamine. Sulfur is provided by the thiocarboxylate moiety of the carrier protein ThiS. In vitro, sulfur can be provided by H(2)S. The chain is Thiazole synthase from Pseudomonas paraeruginosa (strain DSM 24068 / PA7) (Pseudomonas aeruginosa (strain PA7)).